The following is a 689-amino-acid chain: Protein-glutamine gamma-glutamyltransferase 2 (689 aa).

Residues Cys-278, His-336, and Asp-359 contribute to the active site. Positions 399, 401, 437, 447, and 452 each coordinate Ca(2+). The segment at 427 to 453 is disordered; sequence STKSVGRDSREDITHTYKYPEGSEKER. Residues 431-441 show a composition bias toward basic and acidic residues; sequence VGRDSREDITH. 476-483 lines the GTP pocket; sequence RIKLSEGA. Glu-539 serves as a coordination point for Ca(2+). Position 580 to 583 (580 to 583) interacts with GTP; the sequence is RDVY.

This sequence belongs to the transglutaminase superfamily. Transglutaminase family. As to quaternary structure, monomer. Requires Ca(2+) as cofactor. Predominates in mature erythrocytes. Also found in kidney and cardiac muscle.

The protein resides in the cytoplasm. It localises to the cytosol. The protein localises to the nucleus. Its subcellular location is the chromosome. It is found in the secreted. The protein resides in the extracellular space. It localises to the extracellular matrix. The protein localises to the cell membrane. Its subcellular location is the mitochondrion. It carries out the reaction L-glutaminyl-[protein] + L-lysyl-[protein] = [protein]-L-lysyl-N(6)-5-L-glutamyl-[protein] + NH4(+). It catalyses the reaction L-glutaminyl-[protein] + serotonin = 5-serotonyl-L-glutamyl-[protein] + NH4(+). The catalysed reaction is L-glutaminyl-[protein] + dopamine = 5-dopaminyl-L-glutamyl-[protein] + NH4(+). The enzyme catalyses L-glutaminyl-[protein] + histamine = 5-histaminyl-L-glutamyl-[protein] + NH4(+). It carries out the reaction L-glutaminyl-[protein] + (R)-noradrenaline = 5-(R)-noradrenalinyl-L-glutamyl-[protein] + NH4(+). It catalyses the reaction L-glutaminyl-[protein] + H2O = L-glutamyl-[protein] + NH4(+). Acyltransferase activity is regulated by the binding of GTP and Ca(2+): inactivated by GTP, which stabilizes its closed structure, thereby obstructing the accessibility of substrates to the active sites. In contrast, Ca(2+) acts as a cofactor by inducing conformational change to the active open form. In absence of Ca(2+), Mg(2+) may bind Ca(2+)-binding sites, promoting GTP-binding and subsequent inhibition of the acyltransferase activity. Functionally, calcium-dependent acyltransferase that catalyzes the formation of covalent bonds between peptide-bound glutamine and various primary amines, such as gamma-amino group of peptide-bound lysine, or mono- and polyamines, thereby producing cross-linked or aminated proteins, respectively. Involved in many biological processes, such as bone development, angiogenesis, wound healing, cellular differentiation, chromatin modification and apoptosis. Acts as a protein-glutamine gamma-glutamyltransferase by mediating the cross-linking of proteins: under physiological conditions, the protein cross-linking activity is inhibited by GTP; inhibition is relieved by Ca(2+) in response to various stresses. When secreted, catalyzes cross-linking of proteins of the extracellular matrix, resulting in the formation of scaffolds. Plays a key role during apoptosis, both by (1) promoting the cross-linking of cytoskeletal proteins resulting in condensation of the cytoplasm, and by (2) mediating cross-linking proteins of the extracellular matrix, resulting in the irreversible formation of scaffolds that stabilize the integrity of the dying cells before their clearance by phagocytosis, thereby preventing the leakage of harmful intracellular components. In addition to protein cross-linking, can use different monoamine substrates to catalyze a vast array of protein post-translational modifications: mediates aminylation of serotonin, dopamine, noradrenaline or histamine into glutamine residues of target proteins to generate protein serotonylation, dopaminylation, noradrenalinylation or histaminylation, respectively. Mediates protein serotonylation of small GTPases during activation and aggregation of platelets, leading to constitutive activation of these GTPases. Plays a key role in chromatin organization by mediating serotonylation and dopaminylation of histone H3. Catalyzes serotonylation of 'Gln-5' of histone H3 (H3Q5ser) during serotonergic neuron differentiation, thereby facilitating transcription. Acts as a mediator of neurotransmission-independent role of nuclear dopamine in ventral tegmental area (VTA) neurons: catalyzes dopaminylation of 'Gln-5' of histone H3 (H3Q5dop), thereby regulating relapse-related transcriptional plasticity in the reward system. Also acts as a protein deamidase by mediating the side chain deamidation of specific glutamine residues of proteins to glutamate. May also act as an isopeptidase cleaving the previously formed cross-links. Also able to participate in signaling pathways independently of its acyltransferase activity: acts as a signal transducer in alpha-1 adrenergic receptor-mediated stimulation of phospholipase C-delta (PLCD) activity and is required for coupling alpha-1 adrenergic agonists to the stimulation of phosphoinositide lipid metabolism. The chain is Protein-glutamine gamma-glutamyltransferase 2 from Gallus gallus (Chicken).